A 371-amino-acid polypeptide reads, in one-letter code: tRNA-specific 2-thiouridylase MnmA (371 aa).

ATP is bound by residues 14 to 21 (GMSGGVDS) and Met-40. Positions 100–102 (NPD) are interaction with target base in tRNA. Cys-105 functions as the Nucleophile in the catalytic mechanism. A disulfide bridge links Cys-105 with Cys-205. Residue Gly-129 participates in ATP binding. Positions 155 to 157 (KDQ) are interaction with tRNA. Catalysis depends on Cys-205, which acts as the Cysteine persulfide intermediate. Positions 321 to 322 (RY) are interaction with tRNA.

This sequence belongs to the MnmA/TRMU family.

The protein resides in the cytoplasm. It catalyses the reaction S-sulfanyl-L-cysteinyl-[protein] + uridine(34) in tRNA + AH2 + ATP = 2-thiouridine(34) in tRNA + L-cysteinyl-[protein] + A + AMP + diphosphate + H(+). Catalyzes the 2-thiolation of uridine at the wobble position (U34) of tRNA, leading to the formation of s(2)U34. This Bordetella pertussis (strain Tohama I / ATCC BAA-589 / NCTC 13251) protein is tRNA-specific 2-thiouridylase MnmA.